The primary structure comprises 573 residues: MWTFLGIATFTYFYKKCGDVTLANKELLLCVLVFLSLGLVLSYRCRHRNGGLLGRHQSGSQFAAFSDILSALPLIGFFWAKSPPESEKKEQLESKRRRKEVNLSETTLTGAATSVSTSSVTDPEVIIIGSGVLGSALATVLSRDGRTVTVIERDLKEPDRILGECLQPGGYRVLRELGLGDTVESLNAHHIHGYVIHDCESRSEVQIPYPVSENNQVQSGVAFHHGKFIMSLRKAAMAEPNVKFIEGVVLRLLEEDDAVIGVQYKDKETGDTKELHAPLTVVADGLFSKFRKNLISNKVSVSSHFVGFIMKDAPQFKANFAELVLVDPSPVLIYQISPSETRVLVDIRGELPRNLREYMTEQIYPQIPDHLKESFLEACQNARLRTMPASFLPPSSVNKRGVLLLGDAYNLRHPLTGGGMTVALKDIKIWRQLLKDIPDLYDDAAIFQAKKSFFWSRKRSHSFVVNVLAQALYELFSATDDSLRQLRKACFLYFKLGGECLTGPVGLLSILSPDPLLLIRHFFSVAVYATYFCFKSEPWATKPRALFSSGAILYKACSIIFPLIYSEMKYLVH.

Over M1–D19 the chain is Cytoplasmic. The tract at residues M1–K99 is interaction with MARCHF6. An intramembrane segment occupies V20–V40. Topologically, residues L41–H573 are cytoplasmic. The tract at residues Q61–L72 is required for degradation in response to high membrane cholesterol levels. Positions E100–H573 are sufficient for catalytic activity. Residues V132 to L133, E152 to R153, R160, R233, V249, D407, and M420 contribute to the FAD site. The hydrophobic; mediates interaction with membranes stretch occupies residues P515–H573.

Belongs to the squalene monooxygenase family. Interacts (via N-terminal domain) with MARCHF6. Interacts with SMIM22; this interaction modulates lipid droplet formation. FAD serves as cofactor. In terms of processing, ubiquitinated by MARCHF6 in response to high cholesterol levels in intracellular membranes, leading to proteasomal degradation. As to expression, detected in lever (at protein level).

The protein localises to the microsome membrane. Its subcellular location is the endoplasmic reticulum membrane. It catalyses the reaction squalene + reduced [NADPH--hemoprotein reductase] + O2 = (S)-2,3-epoxysqualene + oxidized [NADPH--hemoprotein reductase] + H2O + H(+). The protein operates within terpene metabolism; lanosterol biosynthesis; lanosterol from farnesyl diphosphate: step 2/3. With respect to regulation, inhibited by NB-598 ((E)N-ethyl-N-(6,6-dimethyl-2-hepten-4-ynyl)-3-[(3,3'-bi-thiophen-5-yl)methoxy]benzene-methanamine). Contrary to fungal enzymes, the mammalian enzyme is only slightly inhibited by terbinafine. Its function is as follows. Catalyzes the stereospecific oxidation of squalene to (S)-2,3-epoxysqualene, and is considered to be a rate-limiting enzyme in steroid biosynthesis. The protein is Squalene monooxygenase (Sqle) of Rattus norvegicus (Rat).